Here is a 242-residue protein sequence, read N- to C-terminus: Triosephosphate isomerase (242 aa).

Residue 9–11 (NWK) coordinates substrate. Histidine 99 (electrophile) is an active-site residue. Glutamate 169 acts as the Proton acceptor in catalysis. Substrate is bound by residues glycine 175, serine 207, and 228 to 229 (GG).

Belongs to the triosephosphate isomerase family. In terms of assembly, homodimer.

It is found in the cytoplasm. The catalysed reaction is D-glyceraldehyde 3-phosphate = dihydroxyacetone phosphate. The protein operates within carbohydrate biosynthesis; gluconeogenesis. It functions in the pathway carbohydrate degradation; glycolysis; D-glyceraldehyde 3-phosphate from glycerone phosphate: step 1/1. Its function is as follows. Involved in the gluconeogenesis. Catalyzes stereospecifically the conversion of dihydroxyacetone phosphate (DHAP) to D-glyceraldehyde-3-phosphate (G3P). This Mycoplasma mobile (strain ATCC 43663 / 163K / NCTC 11711) (Mesomycoplasma mobile) protein is Triosephosphate isomerase.